The following is a 120-amino-acid chain: Xibalbin-1 (120 aa).

The signal sequence occupies residues 1-21; the sequence is MISKILIAACALLLISHLVLA. A propeptide spanning residues 22-63 is cleaved from the precursor; it reads VPYLEDGLNSLHNRTGESDETRGYTIQLLKEMPEDDAVEDYS. 4 disulfides stabilise this stretch: Cys-79–Cys-94, Cys-86–Cys-99, Cys-93–Cys-110, and Cys-101–Cys-108.

This sequence belongs to the xibalbin-1 family. Expressed by the venom gland. Not found in the whole body.

The protein localises to the secreted. Its function is as follows. Probable neurotoxin. Strongly inhibits voltage-gated potassium channels (Kv1.1/KCNA1, Kv1.2/KCNA2, Kv1.3/KCNA3, and Kv1.6/KCNA6, with the highest toxicity against Kv1.6 (74% inhibition at 1 uM)) and mildly inhibits sodium channels (Nav1.2/SCN2A, Nav1.4/SCN4A, Nav1.5/SCN5A, Nav1.6/SCN8A, and BgNav). Induces activation of protein kinase A type II (PKA-II) and MAP kinase Erk1/2 in primary nociceptive and non-nociceptive sensory neurons. Does not show cytotoxic activity. Does not have an impact on Ca2+, cAMP, and NO signaling in the cell types analyzed. Does not interfere with the adhesion of leukocytes to endothelial cells. The polypeptide is Xibalbin-1 (Xibalbanus tulumensis (Blind cave remipede)).